We begin with the raw amino-acid sequence, 132 residues long: Fumarate reductase subunit C (132 aa).

A run of 3 helical transmembrane segments spans residues 36–56 (AIPT…LGSL), 70–90 (IVII…VTYY), and 110–130 (IITM…LVFM).

This sequence belongs to the FrdC family. Part of an enzyme complex containing four subunits: a flavoprotein (FrdA), an iron-sulfur protein (FrdB), and two hydrophobic anchor proteins (FrdC and FrdD).

It localises to the cell inner membrane. Functionally, anchors the catalytic components of the fumarate reductase complex to the cell membrane, binds quinones. This Pasteurella multocida (strain Pm70) protein is Fumarate reductase subunit C.